Reading from the N-terminus, the 539-residue chain is Phosphoenolpyruvate carboxykinase (ATP) (539 aa).

Arg-64, Tyr-206, and Lys-212 together coordinate substrate. ATP contacts are provided by residues Lys-212, His-231, and 247–255; that span reads GLSGTGKTT. Mn(2+)-binding residues include Lys-212 and His-231. Asp-268 contacts Mn(2+). ATP-binding positions include Glu-296, Arg-332, 448–449, and Thr-454; that span reads RI. Arg-332 contacts substrate.

Belongs to the phosphoenolpyruvate carboxykinase (ATP) family. Monomer. Requires Mn(2+) as cofactor.

The protein localises to the cytoplasm. It catalyses the reaction oxaloacetate + ATP = phosphoenolpyruvate + ADP + CO2. Its pathway is carbohydrate biosynthesis; gluconeogenesis. Its function is as follows. Involved in the gluconeogenesis. Catalyzes the conversion of oxaloacetate (OAA) to phosphoenolpyruvate (PEP) through direct phosphoryl transfer between the nucleoside triphosphate and OAA. The sequence is that of Phosphoenolpyruvate carboxykinase (ATP) from Salmonella agona (strain SL483).